We begin with the raw amino-acid sequence, 394 residues long: Glutamyl-tRNA reductase (394 aa).

Residues 45–48 (TCNR), Ser99, 104–106 (EEQ), and Gln110 each bind substrate. Catalysis depends on Cys46, which acts as the Nucleophile. 175–180 (GLGNIG) is a binding site for NADP(+).

It belongs to the glutamyl-tRNA reductase family. Homodimer.

The enzyme catalyses (S)-4-amino-5-oxopentanoate + tRNA(Glu) + NADP(+) = L-glutamyl-tRNA(Glu) + NADPH + H(+). It participates in porphyrin-containing compound metabolism; protoporphyrin-IX biosynthesis; 5-aminolevulinate from L-glutamyl-tRNA(Glu): step 1/2. Catalyzes the NADPH-dependent reduction of glutamyl-tRNA(Glu) to glutamate 1-semialdehyde (GSA). In Caldicellulosiruptor saccharolyticus (strain ATCC 43494 / DSM 8903 / Tp8T 6331), this protein is Glutamyl-tRNA reductase.